The sequence spans 501 residues: Arabinose import ATP-binding protein AraG (501 aa).

2 consecutive ABC transporter domains span residues 4 to 239 (LEFN…MVGR) and 252 to 495 (LGDN…LPDK). Position 36 to 43 (36 to 43 (GENGAGKS)) interacts with ATP.

Belongs to the ABC transporter superfamily. Arabinose importer (TC 3.A.1.2.2) family. In terms of assembly, the complex is composed of two ATP-binding proteins (AraG), two transmembrane proteins (AraH) and a solute-binding protein (AraF).

Its subcellular location is the cell inner membrane. The enzyme catalyses L-arabinose(out) + ATP + H2O = L-arabinose(in) + ADP + phosphate + H(+). In terms of biological role, part of the ABC transporter complex AraFGH involved in arabinose import. Responsible for energy coupling to the transport system. The chain is Arabinose import ATP-binding protein AraG from Rhizobium etli (strain ATCC 51251 / DSM 11541 / JCM 21823 / NBRC 15573 / CFN 42).